The chain runs to 519 residues: Cytochrome P450 52E1 (519 aa).

A run of 2 helical transmembrane segments spans residues 10–30 (ALGG…FYFI) and 44–64 (VIVF…TAML). C479 contacts heme.

Belongs to the cytochrome P450 family. Heme is required as a cofactor.

It localises to the membrane. Together with an NADPH cytochrome P450 the enzyme system catalyzes the terminal hydroxylation as the first step in the assimilation of alkanes and fatty acids. In Candida apicola (Yeast), this protein is Cytochrome P450 52E1 (CYP52E1).